A 130-amino-acid chain; its full sequence is Large ribosomal subunit protein bL17 (130 aa).

The protein belongs to the bacterial ribosomal protein bL17 family. In terms of assembly, part of the 50S ribosomal subunit. Contacts protein L32.

In Pectobacterium atrosepticum (strain SCRI 1043 / ATCC BAA-672) (Erwinia carotovora subsp. atroseptica), this protein is Large ribosomal subunit protein bL17.